Reading from the N-terminus, the 147-residue chain is D-aminoacyl-tRNA deacylase (147 aa).

The Gly-cisPro motif, important for rejection of L-amino acids motif lies at 136–137 (GP).

This sequence belongs to the DTD family. In terms of assembly, homodimer.

It localises to the cytoplasm. The enzyme catalyses glycyl-tRNA(Ala) + H2O = tRNA(Ala) + glycine + H(+). It carries out the reaction a D-aminoacyl-tRNA + H2O = a tRNA + a D-alpha-amino acid + H(+). An aminoacyl-tRNA editing enzyme that deacylates mischarged D-aminoacyl-tRNAs. Also deacylates mischarged glycyl-tRNA(Ala), protecting cells against glycine mischarging by AlaRS. Acts via tRNA-based rather than protein-based catalysis; rejects L-amino acids rather than detecting D-amino acids in the active site. By recycling D-aminoacyl-tRNA to D-amino acids and free tRNA molecules, this enzyme counteracts the toxicity associated with the formation of D-aminoacyl-tRNA entities in vivo and helps enforce protein L-homochirality. The polypeptide is D-aminoacyl-tRNA deacylase (Nitratiruptor sp. (strain SB155-2)).